The following is a 269-amino-acid chain: tRNA pseudouridine synthase A (269 aa).

Asp-51 serves as the catalytic Nucleophile. Substrate is bound at residue Tyr-109.

It belongs to the tRNA pseudouridine synthase TruA family. As to quaternary structure, homodimer.

The enzyme catalyses uridine(38/39/40) in tRNA = pseudouridine(38/39/40) in tRNA. Formation of pseudouridine at positions 38, 39 and 40 in the anticodon stem and loop of transfer RNAs. In Histophilus somni (strain 129Pt) (Haemophilus somnus), this protein is tRNA pseudouridine synthase A.